The chain runs to 334 residues: MPLLLRRFPSPSVVSSFFLRRSMASSTISSDIITPSNTKIGWIGTGVMGRSMCGHLIKAGYTVTVFNRTISKAQTLIDMGANVADSPNSVAEQSDVVFTIVGYPSDVRHVLLDPKSGALSGLRQGGVLVDMTTSEPSLAEEIAKAASFKNCFSIDAPVSGGDLGAKNGKLSIFAGGDETTVKRLDPLFSLMGKVNFMGTSGKGQFAKLANQITIASTMLGLVEGLIYAHKAGLDVKKFLEAISTGAAGSKSIDLYGDRILKRDFDPGFYVNHFVKDLGICLNECQRMGLALPGLALAQQLYLSLKAHGEGDLGTQALLLALERLNNVSVQSSDS.

A mitochondrion-targeting transit peptide spans 1–23 (MPLLLRRFPSPSVVSSFFLRRSM). At Ala24 the chain carries N-acetylalanine. NAD(+)-binding positions include 38–67 (TKIGWIGTGVMGRSMCGHLIKAGYTVTVFN) and Thr133. Lys207 is an active-site residue. An NAD(+)-binding site is contributed by Lys275.

This sequence belongs to the HIBADH-related family. 3-hydroxyisobutyrate dehydrogenase subfamily.

It is found in the mitochondrion. It catalyses the reaction 3-hydroxy-2-methylpropanoate + NAD(+) = 2-methyl-3-oxopropanoate + NADH + H(+). It participates in amino-acid degradation; L-valine degradation. The chain is Probable 3-hydroxyisobutyrate dehydrogenase-like 1, mitochondrial from Arabidopsis thaliana (Mouse-ear cress).